The primary structure comprises 215 residues: UPF0502 protein YceH (215 aa).

Residue Lys80 is modified to N6-acetyllysine.

The protein belongs to the UPF0502 family.

In Escherichia coli O7:K1 (strain IAI39 / ExPEC), this protein is UPF0502 protein YceH.